The following is a 423-amino-acid chain: Maintenance of mitochondrial morphology protein 1 (423 aa).

At 1–15 (MWLDDVASELSFTQG) the chain is on the lumenal side. Residues 16 to 36 (LLLGQLSIVILIGAFIKFFIF) traverse the membrane as a helical segment. At 37-423 (GDPPSPDVSA…PGSMPGLSMA (387 aa)) the chain is on the cytoplasmic side. The SMP-LTD domain maps to 110 to 322 (QPESLDWFNV…EPRFQQIELP (213 aa)). Disordered regions lie at residues 327–370 (RKKN…EAET) and 394–423 (SEEGLRFRRRSRGRGDEYAMPGSMPGLSMA). The segment covering 350 to 367 (RSRDVERDLREEARKEVE) has biased composition (basic and acidic residues).

This sequence belongs to the MMM1 family. Homodimer. Component of the ER-mitochondria encounter structure (ERMES) or MDM complex, composed of mmm1, mdm10, mdm12 and mdm34. A mmm1 homodimer associates with one molecule of mdm12 on each side in a pairwise head-to-tail manner, and the SMP-LTD domains of mmm1 and mdm12 generate a continuous hydrophobic tunnel for phospholipid trafficking.

Its subcellular location is the endoplasmic reticulum membrane. Component of the ERMES/MDM complex, which serves as a molecular tether to connect the endoplasmic reticulum (ER) and mitochondria. Components of this complex are involved in the control of mitochondrial shape and protein biogenesis, and function in nonvesicular lipid trafficking between the ER and mitochondria. The mdm12-mmm1 subcomplex functions in the major beta-barrel assembly pathway that is responsible for biogenesis of all outer membrane beta-barrel proteins, and acts in a late step after the SAM complex. The mdm10-mdm12-mmm1 subcomplex further acts in the TOM40-specific pathway after the action of the mdm12-mmm1 complex. Essential for establishing and maintaining the structure of mitochondria and maintenance of mtDNA nucleoids. This Sclerotinia sclerotiorum (strain ATCC 18683 / 1980 / Ss-1) (White mold) protein is Maintenance of mitochondrial morphology protein 1.